The following is a 316-amino-acid chain: MSIKEQSLMTPYLQFDRSQWAALRDSVPMTLTEDEIAQLKGINEDLSLEEVAEIYLPLSRLLNFYISSNLRRQAVLEQFLGTNGQRIPYIISIAGSVAVGKSTTARVLQALLSRWPEHRRVELITTDGFLHPNQVLKERGLMKKKGFPESYDMHRLVKFVSDLKSGVPNVTAPVYSHLIYDVIPEGDKTVAQPDILILEGLNVLQSGMDYPHDPHHVFVSDFVDFSIYVDAPEELLQTWYINRFLKFREGAFTDPDSYFHNYAKLSKEEAVNTATSLWKEINWLNLKQNILPTRERASLIMTKSANHAVEQVRLRK.

95–102 (GSVAVGKS) is an ATP binding site.

Belongs to the prokaryotic pantothenate kinase family.

It is found in the cytoplasm. The catalysed reaction is (R)-pantothenate + ATP = (R)-4'-phosphopantothenate + ADP + H(+). The protein operates within cofactor biosynthesis; coenzyme A biosynthesis; CoA from (R)-pantothenate: step 1/5. The sequence is that of Pantothenate kinase from Salmonella choleraesuis (strain SC-B67).